The following is a 343-amino-acid chain: Probable dolichyl-diphosphooligosaccharide--protein glycosyltransferase subunit 3A (343 aa).

A signal peptide spans 1–22 (MVIQTNLSYRFFILIVFLFTLA). Over 23 to 185 (NPKSDSDLKN…TVCSIQRPPL (163 aa)) the chain is Lumenal. Residues Asn105, Asn108, and Asn146 are each glycosylated (N-linked (GlcNAc...) asparagine). A helical membrane pass occupies residues 186–206 (ISKTQIGIIVAIIIISTPILI). Over 207–220 (KKILKGETLLHDHR) the chain is Cytoplasmic. The helical transmembrane segment at 221-241 (IWLVGAVFVYFFSVSGTMHNI) threads the bilayer. Over 242–273 (IREMPMYIKDYEDSSKFVFFIEESEMQLGAEG) the chain is Lumenal. Residues 274-294 (FFVGFLYTVVGLLLAFVTNVV) traverse the membrane as a helical segment. Over 295–304 (VRVKKLDEQR) the chain is Cytoplasmic. The chain crosses the membrane as a helical span at residues 305–325 (MAMLLALSISFWAVRKVVYLD). At 326–343 (NWKTGYEIYPYWPSSWRG) the chain is on the lumenal side.

The protein belongs to the OST3/OST6 family. In terms of assembly, component of the oligosaccharyltransferase (OST) complex.

The protein resides in the endoplasmic reticulum membrane. In terms of biological role, subunit of the oligosaccharyl transferase (OST) complex that catalyzes the initial transfer of a defined glycan (Glc(3)Man(9)GlcNAc(2) in eukaryotes) from the lipid carrier dolichol-pyrophosphate to an asparagine residue within an Asn-X-Ser/Thr consensus motif in nascent polypeptide chains, the first step in protein N-glycosylation. N-glycosylation occurs cotranslationally and the complex associates with the Sec61 complex at the channel-forming translocon complex that mediates protein translocation across the endoplasmic reticulum (ER). All subunits are required for a maximal enzyme activity. In Arabidopsis thaliana (Mouse-ear cress), this protein is Probable dolichyl-diphosphooligosaccharide--protein glycosyltransferase subunit 3A (OST3A).